The primary structure comprises 97 residues: uncharacterized protein (97 aa).

The disordered stretch occupies residues 72-97; the sequence is TVERKRSEHTNSRKKDPSAYTWSDVK. A compositionally biased stretch (basic and acidic residues) spans 73-88; that stretch reads VERKRSEHTNSRKKDP.

It belongs to the chlamydial CPn_0121/CT_031/TC_0300 family.

This is an uncharacterized protein from Chlamydia pneumoniae (Chlamydophila pneumoniae).